The following is a 458-amino-acid chain: ATP synthase subunit beta (458 aa).

148–155 (GGAGVGKT) is a binding site for ATP.

Belongs to the ATPase alpha/beta chains family. In terms of assembly, F-type ATPases have 2 components, CF(1) - the catalytic core - and CF(0) - the membrane proton channel. CF(1) has five subunits: alpha(3), beta(3), gamma(1), delta(1), epsilon(1). CF(0) has three main subunits: a(1), b(2) and c(9-12). The alpha and beta chains form an alternating ring which encloses part of the gamma chain. CF(1) is attached to CF(0) by a central stalk formed by the gamma and epsilon chains, while a peripheral stalk is formed by the delta and b chains.

It localises to the cell inner membrane. It carries out the reaction ATP + H2O + 4 H(+)(in) = ADP + phosphate + 5 H(+)(out). Functionally, produces ATP from ADP in the presence of a proton gradient across the membrane. The catalytic sites are hosted primarily by the beta subunits. The sequence is that of ATP synthase subunit beta from Nitrosococcus oceani (strain ATCC 19707 / BCRC 17464 / JCM 30415 / NCIMB 11848 / C-107).